A 480-amino-acid polypeptide reads, in one-letter code: MSSTTVKNLVNQPYKYGFVTNIEADAIPRGLSEDVVRLISAKKNEPEFMLDFRLRAYRHWLTMAEPTWPAVHYPPIDYQDIIYYSAPKQSKKKLESLDEVDPALLETFEKLGIPLSEQKRLSNVAVDAIFDSVSIGTTFKEKLAEDGVIFCSISEALQEHPDLVQKYLGSVVPTADNFFAALNSAVFSDGSFVFIPKGVKCPMELSTYFRINNGDTGQFERTLIIAEEGASVSYLEGCTAPMYDTNQLHAAVVELVALDNADIKYSTVQNWYAGDENGKGGIYNFVTKRGLCKGVNSKISWTQVETGSAITWKYPSCVLVGDNSVGEFYSIALTNNKQQADTGTKMIHIGKNTRSIIISKGISAGNSANSYRGLVKMGPKAQGARNYSQCDSMLIGDRAAANTFPYIQVDNNTAKVEHEASTSKIGEDQLFYFAQRGISEEDAVSMLVSGFCKDVLNELPMEFAAEADKLLSLKLEGTVG.

Belongs to the iron-sulfur cluster assembly SufBD family.

The protein is Iron-sulfur cluster assembly SufBD family protein slr0074 of Synechocystis sp. (strain ATCC 27184 / PCC 6803 / Kazusa).